We begin with the raw amino-acid sequence, 197 residues long: ATP-dependent Clp protease proteolytic subunit (197 aa).

S100 acts as the Nucleophile in catalysis. H125 is a catalytic residue.

It belongs to the peptidase S14 family. As to quaternary structure, component of the chloroplastic Clp protease core complex.

The protein resides in the plastid. The protein localises to the chloroplast stroma. It catalyses the reaction Hydrolysis of proteins to small peptides in the presence of ATP and magnesium. alpha-casein is the usual test substrate. In the absence of ATP, only oligopeptides shorter than five residues are hydrolyzed (such as succinyl-Leu-Tyr-|-NHMec, and Leu-Tyr-Leu-|-Tyr-Trp, in which cleavage of the -Tyr-|-Leu- and -Tyr-|-Trp bonds also occurs).. In terms of biological role, cleaves peptides in various proteins in a process that requires ATP hydrolysis. Has a chymotrypsin-like activity. Plays a major role in the degradation of misfolded proteins. In Angiopteris evecta (Mule's foot fern), this protein is ATP-dependent Clp protease proteolytic subunit.